The chain runs to 494 residues: Putative glucuronosyltransferase PGSIP7 (494 aa).

A helical membrane pass occupies residues 4–24; the sequence is QRTLMFSCWVLSLLIIKTTAY. Residues aspartate 161 and aspartate 163 each coordinate Mn(2+). 5 consecutive transmembrane segments (helical) span residues 316–336, 362–382, 389–409, 410–430, and 444–464; these read YSAEMPWVLTQAVFYLGIILV, AFKFVALLFILSAYIIPFFII, LIGWSLYLTGSFALSTIPINA, FLLPILPVITPWLGIFGTLLV, and LSVFGYAFCCAPFLWVSFVKI.

This sequence belongs to the glycosyltransferase 8 family. Glycogenin subfamily. It depends on Mn(2+) as a cofactor.

It localises to the membrane. The polypeptide is Putative glucuronosyltransferase PGSIP7 (PGSIP7) (Arabidopsis thaliana (Mouse-ear cress)).